The primary structure comprises 309 residues: Tagatose-6-phosphate kinase (309 aa).

The protein belongs to the carbohydrate kinase PfkB family. LacC subfamily.

It carries out the reaction D-tagatofuranose 6-phosphate + ATP = D-tagatofuranose 1,6-bisphosphate + ADP + H(+). It functions in the pathway carbohydrate metabolism; D-tagatose 6-phosphate degradation; D-glyceraldehyde 3-phosphate and glycerone phosphate from D-tagatose 6-phosphate: step 1/2. The sequence is that of Tagatose-6-phosphate kinase from Streptococcus pneumoniae serotype 19F (strain G54).